A 699-amino-acid chain; its full sequence is PTS system glucose-specific EIICBA component (699 aa).

In terms of domain architecture, PTS EIIC type-1 spans 3–424 (KALFGVLQKI…FNLKTPGRED (422 aa)). 11 consecutive transmembrane segments (helical) span residues 16–36 (LMLP…GNAM), 66–86 (IVFD…LANG), 89–109 (VAGI…SAVL), 139–159 (IPTL…AALL), 180–200 (FVPI…LVIW), 233–253 (LIPF…FFSY), 283–303 (FMTG…LAIY), 313–333 (LVAG…ITEP), 338–358 (FLFV…LSFM), 365–385 (VKIG…GILP), and 388–408 (TAWW…YFGF). The 82-residue stretch at 439–520 (GDLPYEILQA…QDIIAGRKPR (82 aa)) folds into the PTS EIIB type-1 domain. Cys461 acts as the Phosphocysteine intermediate; for EIIB activity in catalysis. The PTS EIIA type-1 domain occupies 568–672 (DQVFSGKMMG…SLMTPIVFTN (105 aa)). The active-site Tele-phosphohistidine intermediate; for EIIA activity is His620.

The protein localises to the cell membrane. It carries out the reaction N(pros)-phospho-L-histidyl-[protein] + D-glucose(out) = D-glucose 6-phosphate(in) + L-histidyl-[protein]. It catalyses the reaction D-glucosamine(out) + N(pros)-phospho-L-histidyl-[protein] = D-glucosamine 6-phosphate(in) + L-histidyl-[protein]. The phosphoenolpyruvate-dependent sugar phosphotransferase system (sugar PTS), a major carbohydrate active transport system, catalyzes the phosphorylation of incoming sugar substrates concomitantly with their translocation across the cell membrane. This system is involved in glucose transport. The system can also transport glucosamine. Its function is as follows. In addition, plays an important role in the phosphorylation of EIIA-deficient PTS transporters. The EIIA domain can transfer a phosphoryl group to EIIA-deficient PTS transporters, enabling growth with maltose, N-acetylglucosamine, sucrose or trehalose as the sole carbon source. The protein is PTS system glucose-specific EIICBA component (ptsG) of Bacillus subtilis (strain 168).